The following is a 76-amino-acid chain: Large ribosomal subunit protein eL20 (76 aa).

The protein belongs to the eukaryotic ribosomal protein eL20 family. Part of the 50S ribosomal subunit. Binds 23S rRNA.

The polypeptide is Large ribosomal subunit protein eL20 (Methanococcus maripaludis (strain C6 / ATCC BAA-1332)).